The primary structure comprises 256 residues: Mannose-specific lectin 1 (256 aa).

The first 23 residues, 1-23 (MAKLLLFLLPAILGLLVPRSAVA), serve as a signal peptide directing secretion. 2 Bulb-type lectin domains span residues 26–131 (TNYL…PWVR) and 145–252 (NNLL…SKRS). Residues 51-55 (QDDCN), tyrosine 59, tryptophan 63, glutamine 64, 170-174 (QGDCN), tyrosine 178, and 182-185 (YGWQ) each bind beta-D-mannose. Residues 51-59 (QDDCNLVLY) carry the Carbohydrate-binding motif 1 motif. Cystine bridges form between cysteine 54–cysteine 74 and cysteine 173–cysteine 195. The Carbohydrate-binding motif 2 signature appears at 170-178 (QGDCNLVLY).

In terms of assembly, forms heterodimers.

It is found in the secreted. Mannose-specific lectin. Shows agglutinating activity towards erythrocytes from rabbit. In Remusatia vivipara (Hitchhiker elephant ear), this protein is Mannose-specific lectin 1.